Here is a 138-residue protein sequence, read N- to C-terminus: Small ribosomal subunit protein uS11c (138 aa).

The disordered stretch occupies residues 1 to 23 (MAKPILRIGSRKNTRSSSRKNVR). Residues 9–23 (GSRKNTRSSSRKNVR) show a composition bias toward basic residues.

This sequence belongs to the universal ribosomal protein uS11 family. In terms of assembly, part of the 30S ribosomal subunit.

The protein localises to the plastid. Its subcellular location is the chloroplast. The sequence is that of Small ribosomal subunit protein uS11c from Nasturtium officinale (Watercress).